A 231-amino-acid chain; its full sequence is MNSPSIHTIAPQNEQALLQRAQSLAGYNLAELADIALLPLPANLKRDKGWIGILLERFLGASAGSKPEQDFPEIGVELKTIPIDEQGKPLETTFVCVAPLTGNSGVTWESSHVRHKLARVLWIPVEGSRHIPLGERRIGTPLIWSPNDEEEEQLRCDWEELMDLIVLGRVESITARHGEVLQLRPKAANSRALTEAIGEFGQPILTLPRGFYLKKTFTAPLLARHFMQLSN.

The protein belongs to the MutH family.

The protein resides in the cytoplasm. Sequence-specific endonuclease that cleaves unmethylated GATC sequences. It is involved in DNA mismatch repair. This is DNA mismatch repair protein MutH from Pectobacterium atrosepticum (strain SCRI 1043 / ATCC BAA-672) (Erwinia carotovora subsp. atroseptica).